A 384-amino-acid polypeptide reads, in one-letter code: DNA replication and repair protein RecF (384 aa).

Position 43-50 (G43–T50) interacts with ATP.

Belongs to the RecF family.

Its subcellular location is the cytoplasm. Functionally, the RecF protein is involved in DNA metabolism; it is required for DNA replication and normal SOS inducibility. RecF binds preferentially to single-stranded, linear DNA. It also seems to bind ATP. In Brucella suis biovar 1 (strain 1330), this protein is DNA replication and repair protein RecF.